A 140-amino-acid polypeptide reads, in one-letter code: Nucleoside diphosphate kinase (140 aa).

The ATP site is built by K11, F59, R87, T93, R104, and N114. H117 functions as the Pros-phosphohistidine intermediate in the catalytic mechanism.

The protein belongs to the NDK family. In terms of assembly, homotetramer. The cofactor is Mg(2+).

The protein localises to the cytoplasm. The catalysed reaction is a 2'-deoxyribonucleoside 5'-diphosphate + ATP = a 2'-deoxyribonucleoside 5'-triphosphate + ADP. The enzyme catalyses a ribonucleoside 5'-diphosphate + ATP = a ribonucleoside 5'-triphosphate + ADP. Its function is as follows. Major role in the synthesis of nucleoside triphosphates other than ATP. The ATP gamma phosphate is transferred to the NDP beta phosphate via a ping-pong mechanism, using a phosphorylated active-site intermediate. This chain is Nucleoside diphosphate kinase, found in Xanthobacter autotrophicus (strain ATCC BAA-1158 / Py2).